A 360-amino-acid chain; its full sequence is Peptide chain release factor 1 (360 aa).

At glutamine 235 the chain carries N5-methylglutamine.

This sequence belongs to the prokaryotic/mitochondrial release factor family. Post-translationally, methylated by PrmC. Methylation increases the termination efficiency of RF1.

It is found in the cytoplasm. Its function is as follows. Peptide chain release factor 1 directs the termination of translation in response to the peptide chain termination codons UAG and UAA. This is Peptide chain release factor 1 from Burkholderia multivorans (strain ATCC 17616 / 249).